The sequence spans 63 residues: Kappa-theraphotoxin-Gr3a (63 aa).

The signal sequence occupies residues 1 to 21; it reads MKTSVFVLVLGLVLLFAVSFA. Residues 22–29 constitute a propeptide that is removed on maturation; that stretch reads TEMEESAR. 3 cysteine pairs are disulfide-bonded: C31–C45, C38–C50, and C44–C57.

This sequence belongs to the neurotoxin 10 (Hwtx-1) family. 63 (VsTx1) subfamily. In terms of tissue distribution, expressed by the venom gland.

It localises to the secreted. Inhibits sodium channels Nav1.7/SCN9A and potassium channels Kv11.1/KCNH2. Also binds the voltage-sensor domain of the potassium channel KvAP (from the archaeon Aeropyrum pernix) with very slow apparent binding kinetics and affects channel gating. Reaches its target by dynamically partitioning into anionic or zwitterionic headgroup lipid membranes. May bind to the open state of KvAP. This Grammostola rosea (Chilean rose tarantula) protein is Kappa-theraphotoxin-Gr3a.